We begin with the raw amino-acid sequence, 156 residues long: Probable succinate transporter subunit YjjB (156 aa).

The next 4 helical transmembrane spans lie at 7–27, 54–74, 86–106, and 128–148; these read WALL…AMVF, FGMN…VIGI, VFTV…TAMI, and FLKA…PGLW.

It belongs to the ThrE exporter (TC 2.A.79) family. The transporter is composed of YjjB and YjjP.

Its subcellular location is the cell inner membrane. Involved in succinate export with YjjP. Both proteins are required for export. This Yersinia pseudotuberculosis serotype I (strain IP32953) protein is Probable succinate transporter subunit YjjB.